Consider the following 89-residue polypeptide: Acyl-CoA-binding protein (89 aa).

One can recognise an ACB domain in the interval 3–88; it reads LKEEFEEHAE…VKQLFEAAGS (86 aa). Residues 30–34, Lys56, and Tyr75 contribute to the an acyl-CoA site; that span reads YGLYK.

This sequence belongs to the ACBP family.

In terms of biological role, binds medium- and long-chain acyl-CoA esters with very high affinity and may function as an intracellular carrier of acyl-CoA esters. The protein is Acyl-CoA-binding protein of Gossypium hirsutum (Upland cotton).